The primary structure comprises 755 residues: MTERQIYTVSAEIAGRTLTLEAGRFAEQADGAVVARYGDTMLLATVVCAKEAREGTDFFPLTVDYEEKMYAVGKIPANFFKREGRPTTTAILISRLTDRPLRPLFPKGFYNEVQVIITTFSIDMENDPGPLAIIAASAALAISDIPFAGPVGAVQMGHLDGKLVVNPKMGEIEKSRLDLVVAGTKDAVLMVEAGAYELSEDEMLQAVIEGHAVCKQICELQEQLVQLCGKPKRPFTPPVVDTSLEEAISAWMGDRLRKAVRSPVKQEREAQTEALKAEVIAHFTADEPEEEIPNRTKEVSKAFEKLLKDEVRNAILDEGIRVDGRALDEIRPISIEVGVVPRVHGSALFTRGQTQVLTIATLGSPGDEQKVDDLGIETTKRYIHHYNFPPFSTGEIRRLGTPRRRDIGHGALAERSLYAVLPSEEEFPYTIRLVSEVLSSNGSSSMASVCGSSLSLMDAGVPIKAPVAGVAMGLITGEDGRWRVLTDIQGIEDALGDMDFKVAGTANGVTGLQMDIKTTGITYEIMRQAFAQARAGRLFILEKMNAVISAPRPELSIYAPRIMTIQIPVDKIGALIGPGGKTIRNICDTTGAQIDIEDDGRVFITAPDGEAAKKAISMIEGLTREAKVGDIFLGKVVSIKPFGAFVNILPGKDGMVHVSELDEKRVENVEDVVSLGDEINVMVIDIDRNTGKISLSRRAVLTGETPEARKAAGAAPRPRPREEQRGGREEPRSLREELRGPRRDGERPRPRRRDD.

Residues D493 and D499 each coordinate Mg(2+). Positions 560–619 (PRIMTIQIPVDKIGALIGPGGKTIRNICDTTGAQIDIEDDGRVFITAPDGEAAKKAISMI) constitute a KH domain. The 70-residue stretch at 629 to 698 (GDIFLGKVVS…NTGKISLSRR (70 aa)) folds into the S1 motif domain. Residues 704-755 (ETPEARKAAGAAPRPRPREEQRGGREEPRSLREELRGPRRDGERPRPRRRDD) form a disordered region. A compositionally biased stretch (basic and acidic residues) spans 719 to 755 (RPREEQRGGREEPRSLREELRGPRRDGERPRPRRRDD).

Belongs to the polyribonucleotide nucleotidyltransferase family. Mg(2+) serves as cofactor.

It is found in the cytoplasm. It catalyses the reaction RNA(n+1) + phosphate = RNA(n) + a ribonucleoside 5'-diphosphate. Involved in mRNA degradation. Catalyzes the phosphorolysis of single-stranded polyribonucleotides processively in the 3'- to 5'-direction. The chain is Polyribonucleotide nucleotidyltransferase from Chloroflexus aggregans (strain MD-66 / DSM 9485).